Here is an 814-residue protein sequence, read N- to C-terminus: S-layer protein sap (814 aa).

Positions 1-29 are cleaved as a signal peptide; that stretch reads MAKTNSYKKVIAGTMTAAMVAGVVSPVAA. SLH domains follow at residues 30 to 93, 94 to 150, and 152 to 214; these read AGKT…DAKP, SFAD…KVNG, and PATK…AAKV. Positions 403 to 479 constitute a BIG2 domain; that stretch reads FTSKDFKQNN…TVKDSKGKEL (77 aa).

Probably glycosylated.

Its subcellular location is the secreted. It is found in the cell wall. The protein resides in the S-layer. Functionally, the S-layer is a paracrystalline mono-layered assembly of proteins which coat the surface of bacteria. This Bacillus anthracis protein is S-layer protein sap (sap).